We begin with the raw amino-acid sequence, 256 residues long: Imidazole glycerol phosphate synthase subunit HisF (256 aa).

Active-site residues include Asp12 and Asp131.

The protein belongs to the HisA/HisF family. Heterodimer of HisH and HisF.

It is found in the cytoplasm. It catalyses the reaction 5-[(5-phospho-1-deoxy-D-ribulos-1-ylimino)methylamino]-1-(5-phospho-beta-D-ribosyl)imidazole-4-carboxamide + L-glutamine = D-erythro-1-(imidazol-4-yl)glycerol 3-phosphate + 5-amino-1-(5-phospho-beta-D-ribosyl)imidazole-4-carboxamide + L-glutamate + H(+). It functions in the pathway amino-acid biosynthesis; L-histidine biosynthesis; L-histidine from 5-phospho-alpha-D-ribose 1-diphosphate: step 5/9. Its function is as follows. IGPS catalyzes the conversion of PRFAR and glutamine to IGP, AICAR and glutamate. The HisF subunit catalyzes the cyclization activity that produces IGP and AICAR from PRFAR using the ammonia provided by the HisH subunit. The polypeptide is Imidazole glycerol phosphate synthase subunit HisF (Bifidobacterium longum (strain DJO10A)).